Reading from the N-terminus, the 286-residue chain is Phosphatidylserine decarboxylase proenzyme (286 aa).

Residues aspartate 90, histidine 147, and serine 252 each act as charge relay system; for autoendoproteolytic cleavage activity in the active site. Serine 252 (schiff-base intermediate with substrate; via pyruvic acid; for decarboxylase activity) is an active-site residue. Position 252 is a pyruvic acid (Ser); by autocatalysis (serine 252).

Belongs to the phosphatidylserine decarboxylase family. PSD-B subfamily. Prokaryotic type I sub-subfamily. In terms of assembly, heterodimer of a large membrane-associated beta subunit and a small pyruvoyl-containing alpha subunit. Pyruvate is required as a cofactor. Is synthesized initially as an inactive proenzyme. Formation of the active enzyme involves a self-maturation process in which the active site pyruvoyl group is generated from an internal serine residue via an autocatalytic post-translational modification. Two non-identical subunits are generated from the proenzyme in this reaction, and the pyruvate is formed at the N-terminus of the alpha chain, which is derived from the carboxyl end of the proenzyme. The autoendoproteolytic cleavage occurs by a canonical serine protease mechanism, in which the side chain hydroxyl group of the serine supplies its oxygen atom to form the C-terminus of the beta chain, while the remainder of the serine residue undergoes an oxidative deamination to produce ammonia and the pyruvoyl prosthetic group on the alpha chain. During this reaction, the Ser that is part of the protease active site of the proenzyme becomes the pyruvoyl prosthetic group, which constitutes an essential element of the active site of the mature decarboxylase.

The protein localises to the cell membrane. The catalysed reaction is a 1,2-diacyl-sn-glycero-3-phospho-L-serine + H(+) = a 1,2-diacyl-sn-glycero-3-phosphoethanolamine + CO2. The protein operates within phospholipid metabolism; phosphatidylethanolamine biosynthesis; phosphatidylethanolamine from CDP-diacylglycerol: step 2/2. Catalyzes the formation of phosphatidylethanolamine (PtdEtn) from phosphatidylserine (PtdSer). The protein is Phosphatidylserine decarboxylase proenzyme of Pseudomonas fluorescens (strain SBW25).